We begin with the raw amino-acid sequence, 98 residues long: Acylphosphatase (98 aa).

One can recognise an Acylphosphatase-like domain in the interval 12–98 (TYYVRVRGVV…ERRFERFQQQ (87 aa)). Active-site residues include Arg-27 and Asn-45.

This sequence belongs to the acylphosphatase family.

The catalysed reaction is an acyl phosphate + H2O = a carboxylate + phosphate + H(+). This is Acylphosphatase (acyP) from Burkholderia lata (strain ATCC 17760 / DSM 23089 / LMG 22485 / NCIMB 9086 / R18194 / 383).